The following is a 1011-amino-acid chain: Rap guanine nucleotide exchange factor 4 (1011 aa).

The DEP domain occupies 216–291 (SRAPHMIRDR…DKYLFYRFLD (76 aa)). Residues 422-425 (GKLA) and 432-433 (RA) contribute to the 3',5'-cyclic AMP site. Residues 496 to 634 (QKYTVMSGTP…ELEKIVKQIS (139 aa)) enclose the N-terminal Ras-GEF domain. The 238-residue stretch at 772 to 1009 (SSKDLAYQMT…SQMSHRLEPR (238 aa)) folds into the Ras-GEF domain.

In terms of assembly, interacts with RAP1B, RIMS1 and RIMS2. Probably part of a complex with RIMS2 and GTP-activated RAB3A. Expressed in cerebellum, pituitary, adrenal gland and liver.

The protein resides in the cytoplasm. Its subcellular location is the membrane. Its function is as follows. Guanine nucleotide exchange factor (GEF) for RAP1A, RAP1B and RAP2A small GTPases that is activated by binding cAMP. Seems not to activate RAB3A. Involved in cAMP-dependent, PKA-independent exocytosis through interaction with RIMS2. The sequence is that of Rap guanine nucleotide exchange factor 4 (Rapgef4) from Mus musculus (Mouse).